Here is a 304-residue protein sequence, read N- to C-terminus: tRNA pseudouridine synthase B (304 aa).

Aspartate 41 (nucleophile) is an active-site residue.

This sequence belongs to the pseudouridine synthase TruB family. Type 1 subfamily.

The enzyme catalyses uridine(55) in tRNA = pseudouridine(55) in tRNA. In terms of biological role, responsible for synthesis of pseudouridine from uracil-55 in the psi GC loop of transfer RNAs. This is tRNA pseudouridine synthase B from Nitratidesulfovibrio vulgaris (strain ATCC 29579 / DSM 644 / CCUG 34227 / NCIMB 8303 / VKM B-1760 / Hildenborough) (Desulfovibrio vulgaris).